Here is a 95-residue protein sequence, read N- to C-terminus: Integration host factor subunit beta (95 aa).

It belongs to the bacterial histone-like protein family. In terms of assembly, heterodimer of an alpha and a beta chain.

This protein is one of the two subunits of integration host factor, a specific DNA-binding protein that functions in genetic recombination as well as in transcriptional and translational control. The polypeptide is Integration host factor subunit beta (Paracoccus denitrificans (strain Pd 1222)).